The primary structure comprises 479 residues: Glutamate--tRNA ligase (479 aa).

A 'HIGH' region motif is present at residues P21–G31. Residues K248–R252 carry the 'KMSKS' region motif. An ATP-binding site is contributed by K251.

It belongs to the class-I aminoacyl-tRNA synthetase family. Glutamate--tRNA ligase type 1 subfamily. Monomer.

It localises to the cytoplasm. It catalyses the reaction tRNA(Glu) + L-glutamate + ATP = L-glutamyl-tRNA(Glu) + AMP + diphosphate. In terms of biological role, catalyzes the attachment of glutamate to tRNA(Glu) in a two-step reaction: glutamate is first activated by ATP to form Glu-AMP and then transferred to the acceptor end of tRNA(Glu). The sequence is that of Glutamate--tRNA ligase from Haemophilus ducreyi (strain 35000HP / ATCC 700724).